The primary structure comprises 382 residues: Alkane 1-monooxygenase 2 (382 aa).

The next 4 helical transmembrane spans lie at 17–37, 45–65, 88–108, and 114–134; these read GYLA…FVGV, WAWF…YLVG, VSAI…GHIF, and GLLG…IIAI. His-138, His-142, His-168, His-172, and His-173 together coordinate Fe cation. The helical transmembrane segment at 236–256 threads the bilayer; sequence ALFAATFGLLWGWQGVVFFLG. Fe cation-binding residues include His-312, His-315, and His-316.

This sequence belongs to the fatty acid desaturase type 1 family. AlkB subfamily. The cofactor is Fe(3+).

Its subcellular location is the cell inner membrane. The catalysed reaction is octane + 2 reduced [rubredoxin] + O2 + 2 H(+) = 2 oxidized [rubredoxin] + octan-1-ol + H2O. It functions in the pathway hydrocarbon metabolism; alkane degradation. Its function is as follows. Catalyzes the hydroxylation of n-alkanes in the presence of a NADH-rubredoxin reductase and rubredoxin. It preferably hydroxylases C8-C16 hydrocarbons. In Alcanivorax borkumensis (strain ATCC 700651 / DSM 11573 / NCIMB 13689 / SK2), this protein is Alkane 1-monooxygenase 2 (alkB2).